Consider the following 409-residue polypeptide: Glutamyl-tRNA(Gln) amidotransferase subunit D (409 aa).

Residues 68–390 enclose the Asparaginase/glutaminase domain; it reads RKISVLATGG…DLFRDLFRKN (323 aa). Residues Thr78, Thr152, Asp153, and Lys230 contribute to the active site.

Belongs to the asparaginase 1 family. GatD subfamily. In terms of assembly, heterodimer of GatD and GatE.

The enzyme catalyses L-glutamyl-tRNA(Gln) + L-glutamine + ATP + H2O = L-glutaminyl-tRNA(Gln) + L-glutamate + ADP + phosphate + H(+). In terms of biological role, allows the formation of correctly charged Gln-tRNA(Gln) through the transamidation of misacylated Glu-tRNA(Gln) in organisms which lack glutaminyl-tRNA synthetase. The reaction takes place in the presence of glutamine and ATP through an activated gamma-phospho-Glu-tRNA(Gln). The GatDE system is specific for glutamate and does not act on aspartate. In Thermoplasma acidophilum (strain ATCC 25905 / DSM 1728 / JCM 9062 / NBRC 15155 / AMRC-C165), this protein is Glutamyl-tRNA(Gln) amidotransferase subunit D.